The chain runs to 535 residues: Cytochrome P450 monooxygenase claQ (535 aa).

Helical transmembrane passes span 7 to 27 and 225 to 245; these read IGTW…KLVG and YFAI…NLPT. A heme-binding site is contributed by Cys472.

It belongs to the cytochrome P450 family. Requires heme as cofactor.

It is found in the membrane. It participates in secondary metabolite biosynthesis; terpenoid biosynthesis. In terms of biological role, cytochrome P450 monooxygenase; part of the gene cluster that mediates the biosynthesis of clavilactone A, a meroterpenoid that features a unique benzo-fused ten-membered carbocyclic ring unit with an alpha,beta-epoxy-gamma-lactone moiety, forming an intriguing 10/5/3 tricyclic nested skeleton. Cytochrome P450 monooxygenases claO, claP, claQ, claU, and claW are close orthologs, suggesting that a redundant function or pseudogenes are present in the cla cluster. These monoxygenases are not involved in clavilactone A biosynthesis nor its modification. ClaR, ClaS and ClaT are sufficient to produce clavilactone A. The biosynthesis begins with the prenyltransferase claS that transfers geranyl pyrophosphate (GPP) to hydroquinone to produces geranylhydroquinone. The cytochrome P450 monooxygenase claR then catalyzes the diradical coupling reaction between the intramolecular hydroquinone and allyl moieties to form the benzo-fused ten-membered carbocyclic ring unit of wigantol. Finally the cytochrome P450 monooxygenase claT exquisitely and stereoselectively assembles the alpha,beta-epoxy-gamma-lactone moiety, producing clavilactone A via arnebinol A. The protein is Cytochrome P450 monooxygenase claQ of Ampulloclitocybe clavipes (Club foot).